Reading from the N-terminus, the 258-residue chain is Small ribosomal subunit protein uS15m (258 aa).

A mitochondrion-targeting transit peptide spans 1–57; sequence MLRAAWRALSSVRAQAVTRAPVPALRGGSSASLLSARCGLQPPSLLRAARAYAAVQK. The interval 229–258 is disordered; that stretch reads KAAAAAAKKEKNEGVPENPSNAVPEKTQVN.

It belongs to the universal ribosomal protein uS15 family. As to quaternary structure, component of the mitochondrial ribosome small subunit (28S) which comprises a 12S rRNA and about 30 distinct proteins. Interacts with METTL17.

It is found in the mitochondrion matrix. The sequence is that of Small ribosomal subunit protein uS15m (Mrps15) from Mus musculus (Mouse).